The sequence spans 801 residues: Elongation factor G, mitochondrial (801 aa).

The N-terminal 62 residues, methionine 1–asparagine 62, are a transit peptide targeting the mitochondrion. The tr-type G domain occupies serine 99 to serine 386. Residues alanine 108–threonine 115, aspartate 184–histidine 188, and asparagine 238–aspartate 241 contribute to the GTP site.

The protein belongs to the TRAFAC class translation factor GTPase superfamily. Classic translation factor GTPase family. EF-G/EF-2 subfamily.

The protein resides in the mitochondrion. It participates in protein biosynthesis; polypeptide chain elongation. Mitochondrial GTPase that catalyzes the GTP-dependent ribosomal translocation step during translation elongation. During this step, the ribosome changes from the pre-translocational (PRE) to the post-translocational (POST) state as the newly formed A-site-bound peptidyl-tRNA and P-site-bound deacylated tRNA move to the P and E sites, respectively. Catalyzes the coordinated movement of the two tRNA molecules, the mRNA and conformational changes in the ribosome. The polypeptide is Elongation factor G, mitochondrial (mef1) (Aspergillus niger (strain ATCC MYA-4892 / CBS 513.88 / FGSC A1513)).